The sequence spans 1372 residues: DNA-directed RNA polymerase subunit beta' (1372 aa).

Zn(2+)-binding residues include cysteine 69, cysteine 71, cysteine 84, and cysteine 87. Mg(2+)-binding residues include aspartate 460, aspartate 462, and aspartate 464. The Zn(2+) site is built by cysteine 808, cysteine 882, cysteine 889, and cysteine 892.

The protein belongs to the RNA polymerase beta' chain family. As to quaternary structure, the RNAP catalytic core consists of 2 alpha, 1 beta, 1 beta' and 1 omega subunit. When a sigma factor is associated with the core the holoenzyme is formed, which can initiate transcription. It depends on Mg(2+) as a cofactor. The cofactor is Zn(2+).

It catalyses the reaction RNA(n) + a ribonucleoside 5'-triphosphate = RNA(n+1) + diphosphate. Functionally, DNA-dependent RNA polymerase catalyzes the transcription of DNA into RNA using the four ribonucleoside triphosphates as substrates. This Rickettsia felis (strain ATCC VR-1525 / URRWXCal2) (Rickettsia azadi) protein is DNA-directed RNA polymerase subunit beta'.